A 728-amino-acid chain; its full sequence is Phosphoribosylformylglycinamidine synthase subunit PurL (728 aa).

His42 is a catalytic residue. Positions 45 and 84 each coordinate ATP. Position 86 (Glu86) interacts with Mg(2+). Residues 87–90 (SHNH) and Arg109 each bind substrate. His88 serves as the catalytic Proton acceptor. Asp110 provides a ligand contact to Mg(2+). Substrate is bound at residue Gln237. Asp265 serves as a coordination point for Mg(2+). 309 to 311 (ESQ) provides a ligand contact to substrate. ATP-binding residues include Asp491 and Gly528. Mg(2+) is bound at residue Asn529. A substrate-binding site is contributed by Ser531.

The protein belongs to the FGAMS family. Monomer. Part of the FGAM synthase complex composed of 1 PurL, 1 PurQ and 2 PurS subunits.

Its subcellular location is the cytoplasm. The enzyme catalyses N(2)-formyl-N(1)-(5-phospho-beta-D-ribosyl)glycinamide + L-glutamine + ATP + H2O = 2-formamido-N(1)-(5-O-phospho-beta-D-ribosyl)acetamidine + L-glutamate + ADP + phosphate + H(+). Its pathway is purine metabolism; IMP biosynthesis via de novo pathway; 5-amino-1-(5-phospho-D-ribosyl)imidazole from N(2)-formyl-N(1)-(5-phospho-D-ribosyl)glycinamide: step 1/2. Functionally, part of the phosphoribosylformylglycinamidine synthase complex involved in the purines biosynthetic pathway. Catalyzes the ATP-dependent conversion of formylglycinamide ribonucleotide (FGAR) and glutamine to yield formylglycinamidine ribonucleotide (FGAM) and glutamate. The FGAM synthase complex is composed of three subunits. PurQ produces an ammonia molecule by converting glutamine to glutamate. PurL transfers the ammonia molecule to FGAR to form FGAM in an ATP-dependent manner. PurS interacts with PurQ and PurL and is thought to assist in the transfer of the ammonia molecule from PurQ to PurL. This chain is Phosphoribosylformylglycinamidine synthase subunit PurL, found in Campylobacter jejuni subsp. jejuni serotype O:6 (strain 81116 / NCTC 11828).